Here is a 98-residue protein sequence, read N- to C-terminus: NADH-ubiquinone oxidoreductase chain 4L (98 aa).

3 consecutive transmembrane segments (helical) span residues 1 to 21 (MSMVYFNIFMAFTVSFVGLLM), 29 to 49 (SLLCLEGMMLSLFVMMSMTIL), and 61 to 81 (IILLVFAACEAALGLSLLVMV).

It belongs to the complex I subunit 4L family. Core subunit of respiratory chain NADH dehydrogenase (Complex I) which is composed of 45 different subunits.

The protein localises to the mitochondrion inner membrane. The catalysed reaction is a ubiquinone + NADH + 5 H(+)(in) = a ubiquinol + NAD(+) + 4 H(+)(out). Its function is as follows. Core subunit of the mitochondrial membrane respiratory chain NADH dehydrogenase (Complex I) which catalyzes electron transfer from NADH through the respiratory chain, using ubiquinone as an electron acceptor. Part of the enzyme membrane arm which is embedded in the lipid bilayer and involved in proton translocation. This is NADH-ubiquinone oxidoreductase chain 4L (MT-ND4L) from Phocarctos hookeri (Hooker's sea lion).